We begin with the raw amino-acid sequence, 338 residues long: Protein RecA (338 aa).

68–75 (GPESSGKT) is an ATP binding site.

It belongs to the RecA family.

Its subcellular location is the cytoplasm. Functionally, can catalyze the hydrolysis of ATP in the presence of single-stranded DNA, the ATP-dependent uptake of single-stranded DNA by duplex DNA, and the ATP-dependent hybridization of homologous single-stranded DNAs. It interacts with LexA causing its activation and leading to its autocatalytic cleavage. In Citrifermentans bemidjiense (strain ATCC BAA-1014 / DSM 16622 / JCM 12645 / Bem) (Geobacter bemidjiensis), this protein is Protein RecA.